Consider the following 590-residue polypeptide: 4-oxocyclohex-2-ene-1-carboxylate 5-dehydrogenase (590 aa).

Belongs to the FAD-dependent oxidoreductase 2 family. As to quaternary structure, forms multimers. The cofactor is FAD.

The catalysed reaction is 4-oxocyclohex-2-ene-1-carboxylate + NAD(+) = 4-oxocyclohexa-2,5-diene-1-carboxylate + NADH + H(+). Desaturase involved in a cyclohexanecarboxylate (CHCA) degradation pathway. Probably catalyzes the conversion of 4-oxocyclohexenecarboxylate to 4-oxocyclohex-2,5-dienecarboxylate, which is spontaneously isomerized to 4-hydroxybenzoate (4-HBA). This Sinomonas cyclohexanicum (Corynebacterium cyclohexanicum) protein is 4-oxocyclohex-2-ene-1-carboxylate 5-dehydrogenase.